Reading from the N-terminus, the 416-residue chain is Tyrosine--tRNA ligase (416 aa).

The short motif at 55 to 64 is the 'HIGH' region element; the sequence is PTGSEIHLGH. The short motif at 249 to 253 is the 'KMSKS' region element; the sequence is KMSKS. Lys252 contributes to the ATP binding site. Residues 352–416 enclose the S4 RNA-binding domain; that stretch reads TKAFHLLSSI…GKKTFRRISN (65 aa).

This sequence belongs to the class-I aminoacyl-tRNA synthetase family. TyrS type 2 subfamily. As to quaternary structure, homodimer.

The protein localises to the cytoplasm. It catalyses the reaction tRNA(Tyr) + L-tyrosine + ATP = L-tyrosyl-tRNA(Tyr) + AMP + diphosphate + H(+). In terms of biological role, catalyzes the attachment of tyrosine to tRNA(Tyr) in a two-step reaction: tyrosine is first activated by ATP to form Tyr-AMP and then transferred to the acceptor end of tRNA(Tyr). The sequence is that of Tyrosine--tRNA ligase from Prochlorococcus marinus (strain SARG / CCMP1375 / SS120).